We begin with the raw amino-acid sequence, 150 residues long: 3-hydroxyacyl-[acyl-carrier-protein] dehydratase FabZ (150 aa).

His-51 is an active-site residue.

Belongs to the thioester dehydratase family. FabZ subfamily.

Its subcellular location is the cytoplasm. The catalysed reaction is a (3R)-hydroxyacyl-[ACP] = a (2E)-enoyl-[ACP] + H2O. Its function is as follows. Involved in unsaturated fatty acids biosynthesis. Catalyzes the dehydration of short chain beta-hydroxyacyl-ACPs and long chain saturated and unsaturated beta-hydroxyacyl-ACPs. This is 3-hydroxyacyl-[acyl-carrier-protein] dehydratase FabZ from Geobacter sulfurreducens (strain ATCC 51573 / DSM 12127 / PCA).